The chain runs to 727 residues: 1,4-alpha-glucan branching enzyme GlgB (727 aa).

The Nucleophile role is filled by D405. E458 (proton donor) is an active-site residue.

Belongs to the glycosyl hydrolase 13 family. GlgB subfamily. As to quaternary structure, monomer.

The catalysed reaction is Transfers a segment of a (1-&gt;4)-alpha-D-glucan chain to a primary hydroxy group in a similar glucan chain.. Its pathway is glycan biosynthesis; glycogen biosynthesis. Catalyzes the formation of the alpha-1,6-glucosidic linkages in glycogen by scission of a 1,4-alpha-linked oligosaccharide from growing alpha-1,4-glucan chains and the subsequent attachment of the oligosaccharide to the alpha-1,6 position. The polypeptide is 1,4-alpha-glucan branching enzyme GlgB (Yersinia pestis bv. Antiqua (strain Antiqua)).